A 461-amino-acid chain; its full sequence is Kynureninase (461 aa).

Residues L114, T115, 142–145 (FPSD), D228, H231, and Y253 each bind pyridoxal 5'-phosphate. K254 bears the N6-(pyridoxal phosphate)lysine mark. Pyridoxal 5'-phosphate is bound by residues W288 and N316.

It belongs to the kynureninase family. Homodimer. Requires pyridoxal 5'-phosphate as cofactor.

It is found in the cytoplasm. The catalysed reaction is L-kynurenine + H2O = anthranilate + L-alanine + H(+). It catalyses the reaction 3-hydroxy-L-kynurenine + H2O = 3-hydroxyanthranilate + L-alanine + H(+). The protein operates within amino-acid degradation; L-kynurenine degradation; L-alanine and anthranilate from L-kynurenine: step 1/1. It participates in cofactor biosynthesis; NAD(+) biosynthesis; quinolinate from L-kynurenine: step 2/3. Its function is as follows. Catalyzes the cleavage of L-kynurenine (L-Kyn) and L-3-hydroxykynurenine (L-3OHKyn) into anthranilic acid (AA) and 3-hydroxyanthranilic acid (3-OHAA), respectively. This chain is Kynureninase, found in Candida albicans (strain SC5314 / ATCC MYA-2876) (Yeast).